We begin with the raw amino-acid sequence, 467 residues long: Cytochrome P450 76A1 (467 aa).

Cys410 is a heme binding site.

It belongs to the cytochrome P450 family. Requires heme as cofactor.

In Solanum melongena (Eggplant), this protein is Cytochrome P450 76A1 (CYP76A1).